The sequence spans 270 residues: (+)-cis,cis-nepetalactol synthase NEPS3 (270 aa).

NAD(+)-binding positions include 21-27, 46-48, 70-71, asparagine 97, 165-169, and 198-202; these read GGASGIG, DIQ, DV, YVMSK, and VATPL.

This sequence belongs to the short-chain dehydrogenases/reductases (SDR) family. Forms homotetramers.

It carries out the reaction (S)-8-oxocitronellyl enol = cis-cis-nepetalactol. Functionally, functions as a non-oxidoreductive cyclase to promote the formation of cis-cis-nepetalactol. Cis-cis-nepetalactol is then oxidized by NEPS1 into cis-cis-nepetalactone, which belongs to a family of metabolites that are both insect-repellent and have euphoric effect in cats. Binds NAD(+) as classical short-chain dehydrogenase/reductase (SDR), but does not utilize it for its redox-neutral cyclase activity. This is (+)-cis,cis-nepetalactol synthase NEPS3 from Nepeta racemosa (Catmint).